The primary structure comprises 112 residues: MKKVEAIIRPEKLEIVKKALSDAGYVGMTVSEVKGRGVQGGIVERYRGREYIVDLIPKVKIELVVKEEDVDNVIDIICENARTGNPGDGKIFVIPVERVVRVRTKEEGKEAL.

Thr-29 provides a ligand contact to ADP. 2 residues coordinate ATP: Thr-29 and Val-38. Residue 52–54 (IVD) participates in 2-oxoglutarate binding. ADP is bound by residues Val-64, 88 to 90 (DGK), and 101 to 103 (RVR). Residues Val-64, 86–90 (PGDGK), and 101–103 (RVR) contribute to the ATP site.

This sequence belongs to the P(II) protein family. Homotrimer. Interacts and forms a complex with Amt1.

It localises to the cytoplasm. With respect to regulation, formation of the GlnK1/Amt1 complex is decreased in the presence of Mg-ATP or 2-oxoglutarate. The presence of both effectors abolishes the formation of the complex. In terms of biological role, involved in the regulation of nitrogen metabolism. Regulates the activity of its targets by protein-protein interaction in response to the nitrogen status of the cell. Regulates the activity of the ammonia channel Amt1 via direct interaction. This is Nitrogen regulatory protein GlnK1 from Methanocaldococcus jannaschii (strain ATCC 43067 / DSM 2661 / JAL-1 / JCM 10045 / NBRC 100440) (Methanococcus jannaschii).